The sequence spans 685 residues: Methionine--tRNA ligase (685 aa).

4 residues coordinate Zn(2+): Cys142, Cys145, Cys155, and Cys158. The 'KMSKS' region motif lies at 330–334 (KMSKS). Lys333 serves as a coordination point for ATP. A tRNA-binding domain is found at 584–685 (DFIKVDLRVA…SGAKPGDKVS (102 aa)).

The protein belongs to the class-I aminoacyl-tRNA synthetase family. MetG type 1 subfamily. In terms of assembly, homodimer. Zn(2+) serves as cofactor.

It is found in the cytoplasm. The catalysed reaction is tRNA(Met) + L-methionine + ATP = L-methionyl-tRNA(Met) + AMP + diphosphate. In terms of biological role, is required not only for elongation of protein synthesis but also for the initiation of all mRNA translation through initiator tRNA(fMet) aminoacylation. This chain is Methionine--tRNA ligase, found in Acinetobacter baylyi (strain ATCC 33305 / BD413 / ADP1).